Here is a 357-residue protein sequence, read N- to C-terminus: Sulfate/thiosulfate import ATP-binding protein CysA (357 aa).

Residues 3–237 (IVIQNVSKSF…PKSPFVYDFL (235 aa)) enclose the ABC transporter domain. ATP is bound at residue 35-42 (GPSGSGKT).

Belongs to the ABC transporter superfamily. Sulfate/tungstate importer (TC 3.A.1.6) family. In terms of assembly, the complex is composed of two ATP-binding proteins (CysA), two transmembrane proteins (CysT and CysW) and a solute-binding protein (CysP).

It localises to the cell membrane. The catalysed reaction is sulfate(out) + ATP + H2O = sulfate(in) + ADP + phosphate + H(+). The enzyme catalyses thiosulfate(out) + ATP + H2O = thiosulfate(in) + ADP + phosphate + H(+). Part of the ABC transporter complex CysAWTP involved in sulfate/thiosulfate import. Responsible for energy coupling to the transport system. This is Sulfate/thiosulfate import ATP-binding protein CysA from Halalkalibacterium halodurans (strain ATCC BAA-125 / DSM 18197 / FERM 7344 / JCM 9153 / C-125) (Bacillus halodurans).